The primary structure comprises 60 residues: Protein translocase subunit SecE (60 aa).

Residues 31-51 (VIVVSTVIFFLVFFYALDLGI) traverse the membrane as a helical segment.

This sequence belongs to the SecE/SEC61-gamma family. In terms of assembly, component of the Sec protein translocase complex. Heterotrimer consisting of SecY, SecE and SecG subunits. The heterotrimers can form oligomers, although 1 heterotrimer is thought to be able to translocate proteins. Interacts with the ribosome. Interacts with SecDF, and other proteins may be involved. Interacts with SecA.

The protein localises to the cell membrane. Functionally, essential subunit of the Sec protein translocation channel SecYEG. Clamps together the 2 halves of SecY. May contact the channel plug during translocation. The protein is Protein translocase subunit SecE of Staphylococcus aureus (strain Mu50 / ATCC 700699).